A 422-amino-acid chain; its full sequence is L-threonine dehydratase biosynthetic IlvA (422 aa).

Lysine 56 is subject to N6-(pyridoxal phosphate)lysine. Residues asparagine 83, 189-193, and serine 315 each bind pyridoxal 5'-phosphate; that span reads GGGGL. One can recognise an ACT-like domain in the interval 339–413; that stretch reads HYFILNFPQR…FDPSNIYINE (75 aa).

This sequence belongs to the serine/threonine dehydratase family. In terms of assembly, homotetramer. The cofactor is pyridoxal 5'-phosphate.

It carries out the reaction L-threonine = 2-oxobutanoate + NH4(+). Its pathway is amino-acid biosynthesis; L-isoleucine biosynthesis; 2-oxobutanoate from L-threonine: step 1/1. Catalyzes the anaerobic formation of alpha-ketobutyrate and ammonia from threonine in a two-step reaction. The first step involved a dehydration of threonine and a production of enamine intermediates (aminocrotonate), which tautomerizes to its imine form (iminobutyrate). Both intermediates are unstable and short-lived. The second step is the nonenzymatic hydrolysis of the enamine/imine intermediates to form 2-ketobutyrate and free ammonia. In the low water environment of the cell, the second step is accelerated by RidA. This is L-threonine dehydratase biosynthetic IlvA (ilvA) from Staphylococcus aureus (strain Mu50 / ATCC 700699).